The following is a 458-amino-acid chain: Aldehyde dehydrogenase (458 aa).

Residues W134–N135, K158–S161, and G210–S211 each bind NADP(+). Residue E232 is the Proton acceptor of the active site. L233 is a binding site for NADP(+). C266 (nucleophile) is an active-site residue. E363 is a binding site for NADP(+).

The protein belongs to the aldehyde dehydrogenase family. As to quaternary structure, monomer.

The enzyme catalyses an aldehyde + NAD(+) + H2O = a carboxylate + NADH + 2 H(+). It carries out the reaction an aldehyde + NADP(+) + H2O = a carboxylate + NADPH + 2 H(+). It functions in the pathway carbohydrate metabolism; D-xylose degradation. Aldehyde dehydrogenase able to oxidize various aldehydes such as formaldehyde, glyceraldehyde, butyraldehyde, glutaraldehyde and benzaldehyde (in vitro). Is likely involved in the oxidative D-xylose degradation pathway, catalyzing the oxidation step of 2-oxoglutarate semialdehyde to 2-oxoglutarate. Is able to use both NAD(+) and NADP(+); however, shows a preference for NADP(+). Does not display succinate semialdehyde dehydrogenase activity. This Paenarthrobacter nicotinovorans (Arthrobacter nicotinovorans) protein is Aldehyde dehydrogenase (aldh).